Reading from the N-terminus, the 273-residue chain is 4-hydroxy-tetrahydrodipicolinate reductase 1 (273 aa).

Residues 13–18 (GAAGRM) and Glu39 contribute to the NAD(+) site. Arg40 is an NADP(+) binding site. NAD(+) contacts are provided by residues 103 to 105 (GTT) and 127 to 130 (SGNM). Catalysis depends on His161, which acts as the Proton donor/acceptor. His162 lines the (S)-2,3,4,5-tetrahydrodipicolinate pocket. The active-site Proton donor is Lys165. 171 to 172 (GT) lines the (S)-2,3,4,5-tetrahydrodipicolinate pocket.

It belongs to the DapB family.

The protein resides in the cytoplasm. It catalyses the reaction (S)-2,3,4,5-tetrahydrodipicolinate + NAD(+) + H2O = (2S,4S)-4-hydroxy-2,3,4,5-tetrahydrodipicolinate + NADH + H(+). The catalysed reaction is (S)-2,3,4,5-tetrahydrodipicolinate + NADP(+) + H2O = (2S,4S)-4-hydroxy-2,3,4,5-tetrahydrodipicolinate + NADPH + H(+). It functions in the pathway amino-acid biosynthesis; L-lysine biosynthesis via DAP pathway; (S)-tetrahydrodipicolinate from L-aspartate: step 4/4. In terms of biological role, catalyzes the conversion of 4-hydroxy-tetrahydrodipicolinate (HTPA) to tetrahydrodipicolinate. The polypeptide is 4-hydroxy-tetrahydrodipicolinate reductase 1 (Mesorhizobium japonicum (strain LMG 29417 / CECT 9101 / MAFF 303099) (Mesorhizobium loti (strain MAFF 303099))).